The chain runs to 368 residues: Endoglucanase (368 aa).

The signal sequence occupies residues Met-1–Ala-21. The Proton donor role is filled by Glu-55. Asp-116 (nucleophile) is an active-site residue.

The protein belongs to the glycosyl hydrolase 8 (cellulase D) family.

The protein resides in the secreted. It carries out the reaction Endohydrolysis of (1-&gt;4)-beta-D-glucosidic linkages in cellulose, lichenin and cereal beta-D-glucans.. It participates in glycan metabolism; bacterial cellulose biosynthesis. Its function is as follows. Hydrolyzes carboxymethylcellulose. This is Endoglucanase (bcsZ) from Escherichia coli (strain K12).